A 256-amino-acid chain; its full sequence is DNA repair protein RecO (256 aa).

The protein belongs to the RecO family.

Functionally, involved in DNA repair and RecF pathway recombination. The chain is DNA repair protein RecO from Rhizobium etli (strain CIAT 652).